We begin with the raw amino-acid sequence, 38 residues long: Alpha-conotoxin LvIC (38 aa).

Positions 1–21 are excised as a propeptide; that stretch reads SNGRNAAAGDKPSYWITLAIT. 2 disulfide bridges follow: Cys23–Cys29 and Cys24–Cys34. Residue Gln35 is modified to Glutamine amide.

This sequence belongs to the conotoxin A superfamily. The two analogs ([DelQ14]LvIC and [D1G,DelQ14]LvIC) are amidated at their N-terminal Cys. As to expression, expressed by the venom gland.

The protein localises to the secreted. Its function is as follows. Alpha-conotoxins bind to the nicotinic acetylcholine receptors (nAChR) and inhibit them. This synthetic peptide inhibits rat alpha-6/alpha-3-beta-4 nAChR (IC(50)=3.3 uM). In Conus lividus (Livid cone), this protein is Alpha-conotoxin LvIC.